The primary structure comprises 242 residues: ATP synthase subunit a, chloroplastic (242 aa).

The next 5 helical transmembrane spans lie at 34-54 (GQVL…AVLG), 93-113 (VPFI…GAII), 132-152 (INTT…AGLS), 188-210 (LFGN…PLVI), and 222-242 (GSVQ…EALE).

The protein belongs to the ATPase A chain family. In terms of assembly, F-type ATPases have 2 components, CF(1) - the catalytic core - and CF(0) - the membrane proton channel. CF(1) has five subunits: alpha(3), beta(3), gamma(1), delta(1), epsilon(1). CF(0) has four main subunits: a, b, b' and c.

Its subcellular location is the plastid. The protein localises to the chloroplast thylakoid membrane. Functionally, key component of the proton channel; it plays a direct role in the translocation of protons across the membrane. The sequence is that of ATP synthase subunit a, chloroplastic from Trieres chinensis (Marine centric diatom).